The chain runs to 98 residues: Putative defensin-like protein 233 (98 aa).

A signal peptide spans 1-28 (MGMWCTTLFMVSCVSICLILSHVQEVEA). Cystine bridges form between Cys-35/Cys-96, Cys-45/Cys-70, Cys-53/Cys-86, and Cys-68/Cys-88.

It belongs to the DEFL family. As to expression, expressed at least in stem, root, rosette leaves and flower buds.

It localises to the secreted. The sequence is that of Putative defensin-like protein 233 (SCRL22) from Arabidopsis thaliana (Mouse-ear cress).